We begin with the raw amino-acid sequence, 98 residues long: Large ribosomal subunit protein uL23 (98 aa).

It belongs to the universal ribosomal protein uL23 family. Part of the 50S ribosomal subunit. Contacts protein L29, and trigger factor when it is bound to the ribosome.

In terms of biological role, one of the early assembly proteins it binds 23S rRNA. One of the proteins that surrounds the polypeptide exit tunnel on the outside of the ribosome. Forms the main docking site for trigger factor binding to the ribosome. The polypeptide is Large ribosomal subunit protein uL23 (Streptococcus gordonii (strain Challis / ATCC 35105 / BCRC 15272 / CH1 / DL1 / V288)).